Here is a 555-residue protein sequence, read N- to C-terminus: CTP synthase (555 aa).

The tract at residues 1-265 (MTRYIFITGG…GNRVCEKLNI (265 aa)) is amidoligase domain. S13 contacts CTP. S13 serves as a coordination point for UTP. Residues 14-19 (SLGKGI) and D71 each bind ATP. Residues D71 and E139 each contribute to the Mg(2+) site. CTP contacts are provided by residues 146–148 (DIE), 186–191 (KTKPTQ), and K222. UTP is bound by residues 186 to 191 (KTKPTQ) and K222. The 252-residue stretch at 290 to 541 (TVAVVGKYVD…IKAGLAAKEA (252 aa)) folds into the Glutamine amidotransferase type-1 domain. G351 is a binding site for L-glutamine. The active-site Nucleophile; for glutamine hydrolysis is the C378. Residues 379-382 (LGMQ), E402, and R469 contribute to the L-glutamine site. Catalysis depends on residues H514 and E516.

This sequence belongs to the CTP synthase family. Homotetramer.

It catalyses the reaction UTP + L-glutamine + ATP + H2O = CTP + L-glutamate + ADP + phosphate + 2 H(+). The enzyme catalyses L-glutamine + H2O = L-glutamate + NH4(+). The catalysed reaction is UTP + NH4(+) + ATP = CTP + ADP + phosphate + 2 H(+). The protein operates within pyrimidine metabolism; CTP biosynthesis via de novo pathway; CTP from UDP: step 2/2. Its activity is regulated as follows. Allosterically activated by GTP, when glutamine is the substrate; GTP has no effect on the reaction when ammonia is the substrate. The allosteric effector GTP functions by stabilizing the protein conformation that binds the tetrahedral intermediate(s) formed during glutamine hydrolysis. Inhibited by the product CTP, via allosteric rather than competitive inhibition. In terms of biological role, catalyzes the ATP-dependent amination of UTP to CTP with either L-glutamine or ammonia as the source of nitrogen. Regulates intracellular CTP levels through interactions with the four ribonucleotide triphosphates. The polypeptide is CTP synthase (Coxiella burnetii (strain CbuK_Q154) (Coxiella burnetii (strain Q154))).